Here is a 317-residue protein sequence, read N- to C-terminus: Orange carotenoid-binding protein (317 aa).

The OCP N-terminal domain occupies 18–169 (ADVVPATIAR…DMGFDTSKLG (152 aa)). 3'-hydroxyechinenone is bound by residues Leu-37, Tyr-203, and Trp-290.

It belongs to the orange carotenoid-binding protein family. Homodimer. 3'-hydroxyechinenone is required as a cofactor. Proteolytically cleaved into a red 16.7 kDa form named red carotenoid-binding protein (RCP) which lacks 15 residues from the N-terminus and approximately 150 residues from the C-terminus.

It is found in the cellular thylakoid membrane. Functionally, acts as a blue-light photoreceptor and photo-protectant. Essential for inhibiting damaged induced by excess blue-green light via a process known as non-photochemical quenching (NPQ). Binding carotenoids improves OCP's intrinsic photoprotectant activity by broadening its absorption spectrum and facilitating the dissipation of absorbed energy. In the dark or dim light the stable inactive form (OCP-O) is orange, upon illumination with blue-green light it converts to a metastable active red form (OCP-R), inducing energy dissipation, quenching cellular fluorescence via NPQ. The polypeptide is Orange carotenoid-binding protein (Limnospira maxima (Arthrospira maxima)).